Consider the following 199-residue polypeptide: Probable nicotinate-nucleotide adenylyltransferase (199 aa).

Belongs to the NadD family.

The catalysed reaction is nicotinate beta-D-ribonucleotide + ATP + H(+) = deamido-NAD(+) + diphosphate. Its pathway is cofactor biosynthesis; NAD(+) biosynthesis; deamido-NAD(+) from nicotinate D-ribonucleotide: step 1/1. Functionally, catalyzes the reversible adenylation of nicotinate mononucleotide (NaMN) to nicotinic acid adenine dinucleotide (NaAD). This is Probable nicotinate-nucleotide adenylyltransferase from Roseiflexus castenholzii (strain DSM 13941 / HLO8).